The chain runs to 732 residues: Wall-associated receptor kinase 2 (732 aa).

The N-terminal stretch at 1-23 (MKVQEGLFVVAVFYLAYTQLVKG) is a signal peptide. At 24–329 (QPRKECQTRC…RKVRPEYFRW (306 aa)) the chain is on the extracellular side. 6 N-linked (GlcNAc...) asparagine glycosylation sites follow: Asn57, Asn75, Asn111, Asn154, Asn217, and Asn246. The 48-residue stretch at 230-277 (GDKTCKQVEYRGVCGGNSTCFDSTGGTGYNCKCLEGFEGNPYLPNGCQ) folds into the EGF-like 1 domain. 6 cysteine pairs are disulfide-bonded: Cys234–Cys249, Cys243–Cys260, Cys262–Cys276, Cys282–Cys295, Cys289–Cys304, and Cys306–Cys318. The 42-residue stretch at 278-319 (DINECISSRHNCSEHSTCENTKGSFNCNCPSGYRKDSLNSCT) folds into the EGF-like 2; calcium-binding domain. N-linked (GlcNAc...) asparagine glycosylation occurs at Asn288. The helical transmembrane segment at 330–350 (TQIFLGTTIGFSVIMLGISCL) threads the bilayer. Topologically, residues 351-732 (QQKIKHRKNT…VTTLDIEAGR (382 aa)) are cytoplasmic. Thr393 is subject to Phosphothreonine. Positions 404 to 677 (YHESRILGQG…KEVAAELEAL (274 aa)) constitute a Protein kinase domain. ATP is bound by residues 410–418 (LGQGGQGTV) and Lys432. Residue Tyr477 is modified to Phosphotyrosine. Asp529 acts as the Proton acceptor in catalysis. Thr563 and Thr568 each carry phosphothreonine. At Tyr576 the chain carries Phosphotyrosine.

This sequence belongs to the protein kinase superfamily. Ser/Thr protein kinase family. Predominantly expressed in green tissues such as stems and leaves. Detected at organ junctions.

It is found in the membrane. The catalysed reaction is L-seryl-[protein] + ATP = O-phospho-L-seryl-[protein] + ADP + H(+). It catalyses the reaction L-threonyl-[protein] + ATP = O-phospho-L-threonyl-[protein] + ADP + H(+). Functionally, serine/threonine-protein kinase that may function as a signaling receptor of extracellular matrix component. Binding to pectin may have significance in the control of cell expansion, morphogenesis and development. In Arabidopsis thaliana (Mouse-ear cress), this protein is Wall-associated receptor kinase 2 (WAK2).